A 123-amino-acid chain; its full sequence is Large ribosomal subunit protein bL12 (123 aa).

This sequence belongs to the bacterial ribosomal protein bL12 family. In terms of assembly, homodimer. Part of the ribosomal stalk of the 50S ribosomal subunit. Forms a multimeric L10(L12)X complex, where L10 forms an elongated spine to which 2 to 4 L12 dimers bind in a sequential fashion. Binds GTP-bound translation factors.

Forms part of the ribosomal stalk which helps the ribosome interact with GTP-bound translation factors. Is thus essential for accurate translation. The sequence is that of Large ribosomal subunit protein bL12 from Geobacillus thermodenitrificans (strain NG80-2).